The primary structure comprises 38 residues: Histone H5 (38 aa).

Residues Thr-1–Lys-15 show a composition bias toward pro residues. The segment at Thr-1 to Ala-38 is disordered. Residues Pro-16–Ala-26 show a composition bias toward basic residues.

This sequence belongs to the histone H1/H5 family. Erythroid cells.

The protein resides in the nucleus. It is found in the chromosome. Histone H5 performs the same function as H1, being necessary for the condensation of nucleosome chains into higher order structures, and replaces histone H1 in certain cells. This chain is Histone H5, found in Columba livia (Rock dove).